Consider the following 398-residue polypeptide: GTPase Obg (398 aa).

Residues 1–159 (MKFVDEAPIS…RNLKLELKVL (159 aa)) form the Obg domain. The tract at residues 128 to 148 (TRFKSSTNRVPRKTTPGTEGE) is disordered. In terms of domain architecture, OBG-type G spans 160 to 333 (ADVGMLGLPN…LSGKIMDHLE (174 aa)). GTP contacts are provided by residues 166-173 (GLPNAGKS), 191-195 (FTTLV), 213-216 (DIPG), 283-286 (NKID), and 314-316 (SAL). Residues Ser173 and Thr193 each coordinate Mg(2+).

Belongs to the TRAFAC class OBG-HflX-like GTPase superfamily. OBG GTPase family. Monomer. Mg(2+) is required as a cofactor.

Its subcellular location is the cytoplasm. Functionally, an essential GTPase which binds GTP, GDP and possibly (p)ppGpp with moderate affinity, with high nucleotide exchange rates and a fairly low GTP hydrolysis rate. Plays a role in control of the cell cycle, stress response, ribosome biogenesis and in those bacteria that undergo differentiation, in morphogenesis control. The polypeptide is GTPase Obg (Cellvibrio japonicus (strain Ueda107) (Pseudomonas fluorescens subsp. cellulosa)).